The following is a 277-amino-acid chain: Collectin-10 (277 aa).

Positions M1–G27 are cleaved as a signal peptide. N11 carries an N-linked (GlcNAc...) asparagine glycan. The tract at residues T41 to K103 is disordered. The Collagen-like domain occupies S45 to K103. Positions K49–V67 are enriched in basic and acidic residues. The region spanning T155–E271 is the C-type lectin domain. 2 cysteine pairs are disulfide-bonded: C176-C270 and C248-C262. Residue N258 is glycosylated (N-linked (GlcNAc...) asparagine).

The protein belongs to the COLEC10/COLEC11 family. In terms of tissue distribution, expressed mainly in the liver and stomach, but also in muscles, testes, and intestines.

Its subcellular location is the secreted. The protein localises to the golgi apparatus. The protein resides in the cytoplasm. Lectin that binds to various sugars: galactose &gt; mannose = fucose &gt; N-acetylglucosamine &gt; N-acetylgalactosamine. Acts as a chemoattractant, probably involved in the regulation of cell migration. The protein is Collectin-10 (Colec10) of Mus musculus (Mouse).